Here is a 184-residue protein sequence, read N- to C-terminus: Large ribosomal subunit protein eL14 (184 aa).

A disordered region spans residues 149–184 (KNAKKVDSTPAAKKRIEKARAARKAKPTAAKEKSKK). Over residues 160–174 (AKKRIEKARAARKAK) the composition is skewed to basic residues.

The protein belongs to the eukaryotic ribosomal protein eL14 family.

This chain is Large ribosomal subunit protein eL14, found in Trypanosoma congolense.